A 224-amino-acid chain; its full sequence is MQLLKQLFKKKFVKEEHDKKTGQEGMTLLEVIIVLGIMGVVSAGVVTLAQRAIDSQNMTKAAQNLNSVQIAMTQTYRSLGNYPATANANAATQLANGLVSLGKVSADEAKNPFTGTAMGIFSFPRNSAANKAFAITVGGLTQAQCKTLVTSVGDMFPFINVKEGAFAAVADLGDFETSVADAATGAGVIKSIAPGSANLNLTNITHVEKLCTGTAPFTVAFGNS.

Positions 1-25 (MQLLKQLFKKKFVKEEHDKKTGQEG) are cleaved as a propeptide — atypical leader sequence. Methionine 26 is modified (N-methylmethionine). Residues 26–46 (MTLLEVIIVLGIMGVVSAGVV) traverse the membrane as a helical segment. A disulfide bridge connects residues cysteine 145 and cysteine 211.

It is found in the fimbrium. The protein resides in the membrane. Functionally, major component of the toxin co-regulated pilus (tcp) which is a type IV pilus essential for bacterial aggregation and subsequent colonization in the host small intestine. This chain is Toxin coregulated pilin (tcpA), found in Vibrio cholerae serotype O1 (strain ATCC 39315 / El Tor Inaba N16961).